Reading from the N-terminus, the 414-residue chain is Cytochrome P450 GfsF (414 aa).

The interval 1–32 (MTDTTLVEAGDPAEDAPEWPMKRDTGCPFDPP) is disordered. 6 residues coordinate heme b: His75, His107, Arg111, Arg303, His361, and Cys363.

Belongs to the cytochrome P450 family. In terms of assembly, monomer. Requires heme b as cofactor.

The protein operates within antibiotic biosynthesis. Involved in the synthesis of the 16-membered macrolide antibiotics FD-891 and FD-892. Consecutively catalyzes epoxidation of C8-C9 and then hydroxylation at C10 to convert 25-O-methyl-FD-892 to FD-891. Consecutively catalyzes epoxidation of C8-C9 and then hydroxylation at C10 to convert 8,9-epoxy-FD-892 to 25-O-demethyl-FD-891 as well as converting 25-oxo-FD-892 to 8,9-epoxy-25-oxo-FD-892 and 8,9-epoxy-10-hydroxy-25-oxo-FD-892. In vitro is furnished with P.putida putidaredoxin and putidaredoxin reductase to provide the required two-electron reduction. In Streptomyces halstedii, this protein is Cytochrome P450 GfsF.